A 928-amino-acid polypeptide reads, in one-letter code: Isoleucine--tRNA ligase (928 aa).

A 'HIGH' region motif is present at residues 57–67 (PFANGNIHMGH). L-isoleucyl-5'-AMP is bound at residue Glu552. The 'KMSKS' region signature appears at 593-597 (KMSKS). Lys596 serves as a coordination point for ATP. Cys887, Cys890, Cys907, and Cys910 together coordinate Zn(2+).

This sequence belongs to the class-I aminoacyl-tRNA synthetase family. IleS type 1 subfamily. In terms of assembly, monomer. The cofactor is Zn(2+).

It is found in the cytoplasm. The enzyme catalyses tRNA(Ile) + L-isoleucine + ATP = L-isoleucyl-tRNA(Ile) + AMP + diphosphate. Functionally, catalyzes the attachment of isoleucine to tRNA(Ile). As IleRS can inadvertently accommodate and process structurally similar amino acids such as valine, to avoid such errors it has two additional distinct tRNA(Ile)-dependent editing activities. One activity is designated as 'pretransfer' editing and involves the hydrolysis of activated Val-AMP. The other activity is designated 'posttransfer' editing and involves deacylation of mischarged Val-tRNA(Ile). The sequence is that of Isoleucine--tRNA ligase from Lacticaseibacillus paracasei (strain ATCC 334 / BCRC 17002 / CCUG 31169 / CIP 107868 / KCTC 3260 / NRRL B-441) (Lactobacillus paracasei).